Consider the following 94-residue polypeptide: Sapecin (94 aa).

The N-terminal stretch at 1–23 (MKSFIVLAVTLCLAAFFMGQSVA) is a signal peptide. Residues 24-54 (SPAAAAEESKFVDGLHALKTIEPELHGRYKR) constitute a propeptide that is removed on maturation. Intrachain disulfides connect C57–C84, C70–C90, and C74–C92.

The protein belongs to the invertebrate defensin family. Type 1 subfamily. Hemocytes and fat body.

It localises to the secreted. Functionally, sapecins, which are potent bactericidal proteins, are produced in response to injury. Sapecin is cytotoxic to Gram-positive bacteria, and to a lesser extent against Gram-negative bacteria. This chain is Sapecin, found in Sarcophaga peregrina (Flesh fly).